The sequence spans 258 residues: Uroplakin-1a (258 aa).

The Cytoplasmic segment spans residues 1–14; the sequence is MASAAAAEAEKGSP. The helical transmembrane segment at 15–35 threads the bilayer; that stretch reads VVVGLLVVGNIIILLSGLSLF. Topologically, residues 36–59 are extracellular; sequence AETIWVTADQYRVYPLMGVSGKDD. A helical transmembrane segment spans residues 60–86; it reads VFAGAWIAIFCGFSFFMVASFGVGAAL. Over 87–91 the chain is Cytoplasmic; it reads CRRRS. The chain crosses the membrane as a helical span at residues 92–112; the sequence is MVLTYLVLMLIVYIFECASCI. At 113–230 the chain is on the extracellular side; it reads TSYTHRDYMV…HIGHAIDSYT (118 aa). Residue asparagine 170 is glycosylated (N-linked (GlcNAc...) asparagine). The helical transmembrane segment at 231–252 threads the bilayer; sequence WGISWFGFAILMWTLPVMLIAM. The Cytoplasmic segment spans residues 253-258; it reads YFYTML.

Belongs to the tetraspanin (TM4SF) family. As to quaternary structure, homodimer; disulfide-linked. Interacts with uroplakin-2 (UPK2). In terms of tissue distribution, high expression restricted to ureteric urothelium (most superficial cells); low expression in prostate. Expression in normal urothelial cells is lost in culture. Some expression in tumor cell lines derived from urothelial malignancies.

The protein localises to the membrane. Component of the asymmetric unit membrane (AUM); a highly specialized biomembrane elaborated by terminally differentiated urothelial cells. May play an important role in normal bladder epithelial physiology, possibly in regulating membrane permeability of superficial umbrella cells or in stabilizing the apical membrane through AUM/cytoskeletal interactions. The polypeptide is Uroplakin-1a (UPK1A) (Homo sapiens (Human)).